The following is a 245-amino-acid chain: tRNA (guanine-N(7)-)-methyltransferase (245 aa).

S-adenosyl-L-methionine is bound by residues G70, 93-94, 126-127, and L146; these read EI and NA. The active site involves D149. Residue 224-226 coordinates S-adenosyl-L-methionine; sequence SEE.

This sequence belongs to the class I-like SAM-binding methyltransferase superfamily. TrmB family.

The protein resides in the nucleus. It carries out the reaction guanosine(46) in tRNA + S-adenosyl-L-methionine = N(7)-methylguanosine(46) in tRNA + S-adenosyl-L-homocysteine. It functions in the pathway tRNA modification; N(7)-methylguanine-tRNA biosynthesis. Catalyzes the formation of N(7)-methylguanine at position 46 (m7G46) in tRNA. The sequence is that of tRNA (guanine-N(7)-)-methyltransferase from Aedes aegypti (Yellowfever mosquito).